Here is a 316-residue protein sequence, read N- to C-terminus: tRNA(Ile)-lysidine synthase (316 aa).

Serine 33–serine 38 lines the ATP pocket.

It belongs to the tRNA(Ile)-lysidine synthase family.

It is found in the cytoplasm. It carries out the reaction cytidine(34) in tRNA(Ile2) + L-lysine + ATP = lysidine(34) in tRNA(Ile2) + AMP + diphosphate + H(+). In terms of biological role, ligates lysine onto the cytidine present at position 34 of the AUA codon-specific tRNA(Ile) that contains the anticodon CAU, in an ATP-dependent manner. Cytidine is converted to lysidine, thus changing the amino acid specificity of the tRNA from methionine to isoleucine. The sequence is that of tRNA(Ile)-lysidine synthase from Bdellovibrio bacteriovorus (strain ATCC 15356 / DSM 50701 / NCIMB 9529 / HD100).